Consider the following 404-residue polypeptide: NADH-quinone oxidoreductase subunit D 2 (404 aa).

Belongs to the complex I 49 kDa subunit family. In terms of assembly, NDH-1 is composed of 14 different subunits. Subunits NuoB, C, D, E, F, and G constitute the peripheral sector of the complex.

The protein resides in the cell inner membrane. The catalysed reaction is a quinone + NADH + 5 H(+)(in) = a quinol + NAD(+) + 4 H(+)(out). Functionally, NDH-1 shuttles electrons from NADH, via FMN and iron-sulfur (Fe-S) centers, to quinones in the respiratory chain. The immediate electron acceptor for the enzyme in this species is believed to be ubiquinone. Couples the redox reaction to proton translocation (for every two electrons transferred, four hydrogen ions are translocated across the cytoplasmic membrane), and thus conserves the redox energy in a proton gradient. This Rhizobium etli (strain ATCC 51251 / DSM 11541 / JCM 21823 / NBRC 15573 / CFN 42) protein is NADH-quinone oxidoreductase subunit D 2.